The following is a 427-amino-acid chain: Tegument protein VP16 homolog (427 aa).

It belongs to the herpesviridae tegument protein VP16 protein family.

The protein resides in the virion tegument. It localises to the host nucleus. Its function is as follows. Transcriptional activator of immediate-early (IE) gene products (alpha genes). Acts as a key activator of lytic infection by initiating the lytic program through the assembly of the transcriptional regulatory VP16-induced complex composed of VP16 and two cellular factors, HCFC1 and POU2F1. VP16-induced complex represents a regulatory switch: when it is on, it promotes IE-gene expression and thus lytic infection, and when it is off, it limits IE-gene transcription favoring latent infection. Functionally, may play a role in the aggregation of tegument proteins around nucleocapsids during virus morphogenesis. In Gallus gallus (Chicken), this protein is Tegument protein VP16 homolog (MDV061).